We begin with the raw amino-acid sequence, 662 residues long: Acetyl-coenzyme A synthetase (662 aa).

CoA contacts are provided by residues 197-200 (RKGK) and Thr317. ATP is bound by residues 393 to 395 (GEP), 417 to 422 (DTWWQT), Asp510, and Arg525. Ser533 provides a ligand contact to CoA. Arg536 contacts ATP. The Mg(2+) site is built by His549 and Val552. Lys623 carries the post-translational modification N6-acetyllysine.

Belongs to the ATP-dependent AMP-binding enzyme family. Mg(2+) serves as cofactor. Post-translationally, acetylated. Deacetylation by the SIR2-homolog deacetylase activates the enzyme.

The enzyme catalyses acetate + ATP + CoA = acetyl-CoA + AMP + diphosphate. Functionally, catalyzes the conversion of acetate into acetyl-CoA (AcCoA), an essential intermediate at the junction of anabolic and catabolic pathways. AcsA undergoes a two-step reaction. In the first half reaction, AcsA combines acetate with ATP to form acetyl-adenylate (AcAMP) intermediate. In the second half reaction, it can then transfer the acetyl group from AcAMP to the sulfhydryl group of CoA, forming the product AcCoA. The protein is Acetyl-coenzyme A synthetase of Helicobacter acinonychis (strain Sheeba).